The primary structure comprises 148 residues: Arginine repressor (148 aa).

The protein belongs to the ArgR family.

Its subcellular location is the cytoplasm. The protein operates within amino-acid biosynthesis; L-arginine biosynthesis [regulation]. Its function is as follows. Regulates arginine biosynthesis genes. In Chlorobium limicola (strain DSM 245 / NBRC 103803 / 6330), this protein is Arginine repressor.